The chain runs to 171 residues: MDNRYPIGQFNCPSEVQEKDIQMWIKEITTLPSRLHALTVSLDELELTKTYRENSWNVRQLIHHISDSHLNGYMRMKLALTEDNPVVKTYEESEWAKLIDYELPIRVSLQLLESLHERWTYLLKNLTATQLQRTYQYPDGSIMRIEQSIALYAWHGNHHLAHIQQALIRTK.

Zn(2+)-binding residues include H64, H155, and H159.

The protein belongs to the metal hydrolase YfiT family. Homodimer. The cofactor is Zn(2+).

It localises to the cytoplasm. Functionally, possible metal-dependent hydrolase. The polypeptide is Putative metal-dependent hydrolase BH0277 (Halalkalibacterium halodurans (strain ATCC BAA-125 / DSM 18197 / FERM 7344 / JCM 9153 / C-125) (Bacillus halodurans)).